A 122-amino-acid polypeptide reads, in one-letter code: Large ribosomal subunit protein eL8 (122 aa).

This sequence belongs to the eukaryotic ribosomal protein eL8 family. In terms of assembly, part of the 50S ribosomal subunit. Probably part of the RNase P complex.

It is found in the cytoplasm. Multifunctional RNA-binding protein that recognizes the K-turn motif in ribosomal RNA, the RNA component of RNase P, box H/ACA, box C/D and box C'/D' sRNAs. The polypeptide is Large ribosomal subunit protein eL8 (Methanothrix thermoacetophila (strain DSM 6194 / JCM 14653 / NBRC 101360 / PT) (Methanosaeta thermophila)).